The sequence spans 749 residues: MTTTIIGFPRIGEHRELKFITEKYFRNEIPQEELLEAAKDLRAKHWNIVKEAGITEIPSNDFSHYDNVLDAAVLFNIIPKAVQDLELTDLEKYFALARGYQGEKGDVRARPMKKWFNTNYHYIVPAIEKDTEIKLAGHKIFDEFQEAKNLGITTRPVLIGPFTLLQLTDFEEGLTATNFADSLVAAYGQVFEKLAELGAEKIQLDEPSLVKDLTAEEKALFLRIYQTLLADKKGLQVLIQTYFGDVRDIYTELTSLPVDAIGLDFVEGKETAALVATGFPADKTLYAGIVNGKNIWRNNYEKSLAVLDAIPAENVVITTSCSLLHVPFTTANEEFEPAILNHFAFAVEKLSELRDLDAIRNGQGEVALTANKELFALERVGRDAALADRLAGLTDTDYTRLPVFAERESIQREKLNLPLLPTTTIGSFPQTKEVRSTRLAFRKGNISEEEYDAFVKTQTDEWIAWQEEVDFDVLVHGEFERNDMVEYFGENLSGYLFSKNGWVQSYGMRGVKPPIIWGDVTRLNPITVKWSSYAQSRTNKPVKGMLTGPVTILNWSFPREDISIKESTLQIALAIKEEVLDLEAAGIKIIQIDEAALREKLPLRRSDWYSEYLDWAIPAFRLVHSTVAPDTQIHTHMCYSEFTDIIPAIDNMDADVISFEASRSNLVILDELKAKNFQTQVGPGVYDIHSPRVPAVDEIAHTIQAILAKVPKEKVWINPDCGLKTRGESETKASLIHLTQAAKAARKEL.

Residues 15–18 (RELK) and lysine 114 contribute to the 5-methyltetrahydropteroyltri-L-glutamate site. Residues 425–427 (IGS) and glutamate 478 each bind L-homocysteine. L-methionine contacts are provided by residues 425–427 (IGS) and glutamate 478. Position 555 (tryptophan 555) interacts with 5-methyltetrahydropteroyltri-L-glutamate. L-homocysteine is bound at residue aspartate 593. Aspartate 593 is a binding site for L-methionine. Glutamate 599 serves as a coordination point for 5-methyltetrahydropteroyltri-L-glutamate. Residues histidine 636, cysteine 638, and glutamate 660 each contribute to the Zn(2+) site. Histidine 689 acts as the Proton donor in catalysis. Cysteine 721 provides a ligand contact to Zn(2+).

The protein belongs to the vitamin-B12 independent methionine synthase family. Zn(2+) is required as a cofactor.

It catalyses the reaction 5-methyltetrahydropteroyltri-L-glutamate + L-homocysteine = tetrahydropteroyltri-L-glutamate + L-methionine. The protein operates within amino-acid biosynthesis; L-methionine biosynthesis via de novo pathway; L-methionine from L-homocysteine (MetE route): step 1/1. Functionally, catalyzes the transfer of a methyl group from 5-methyltetrahydrofolate to homocysteine resulting in methionine formation. The chain is 5-methyltetrahydropteroyltriglutamate--homocysteine methyltransferase from Streptococcus suis (strain 05ZYH33).